The following is a 568-amino-acid chain: Glucose-6-phosphate isomerase, cytosolic 1 (568 aa).

Glutamate 360 serves as the catalytic Proton donor. Residues histidine 391 and lysine 516 contribute to the active site.

This sequence belongs to the GPI family. In terms of assembly, homodimer.

The protein resides in the cytoplasm. The enzyme catalyses alpha-D-glucose 6-phosphate = beta-D-fructose 6-phosphate. It functions in the pathway carbohydrate degradation; glycolysis; D-glyceraldehyde 3-phosphate and glycerone phosphate from D-glucose: step 2/4. This Clarkia arcuata (Glandular clarkia) protein is Glucose-6-phosphate isomerase, cytosolic 1 (PGIC1).